The primary structure comprises 429 residues: Ribosomal RNA small subunit methyltransferase B (429 aa).

Residues 254–260, Asp277, Asp303, and Asp322 contribute to the S-adenosyl-L-methionine site; that span reads CAAPGGK. Catalysis depends on Cys375, which acts as the Nucleophile.

Belongs to the class I-like SAM-binding methyltransferase superfamily. RsmB/NOP family.

Its subcellular location is the cytoplasm. The enzyme catalyses cytidine(967) in 16S rRNA + S-adenosyl-L-methionine = 5-methylcytidine(967) in 16S rRNA + S-adenosyl-L-homocysteine + H(+). Its function is as follows. Specifically methylates the cytosine at position 967 (m5C967) of 16S rRNA. This Escherichia coli (strain UTI89 / UPEC) protein is Ribosomal RNA small subunit methyltransferase B.